Consider the following 384-residue polypeptide: S-adenosylmethionine synthase (384 aa).

His-15 serves as a coordination point for ATP. Asp-17 contributes to the Mg(2+) binding site. Residue Glu-43 coordinates K(+). 2 residues coordinate L-methionine: Glu-56 and Gln-99. The tract at residues 99 to 109 (QSPDINQGVDR) is flexible loop. ATP contacts are provided by residues 164–166 (DAK), 230–231 (RF), Asp-239, 245–246 (RK), Ala-262, and Lys-266. Asp-239 provides a ligand contact to L-methionine. Lys-270 serves as a coordination point for L-methionine.

The protein belongs to the AdoMet synthase family. As to quaternary structure, homotetramer; dimer of dimers. Mg(2+) is required as a cofactor. It depends on K(+) as a cofactor.

The protein localises to the cytoplasm. The enzyme catalyses L-methionine + ATP + H2O = S-adenosyl-L-methionine + phosphate + diphosphate. The protein operates within amino-acid biosynthesis; S-adenosyl-L-methionine biosynthesis; S-adenosyl-L-methionine from L-methionine: step 1/1. Its function is as follows. Catalyzes the formation of S-adenosylmethionine (AdoMet) from methionine and ATP. The overall synthetic reaction is composed of two sequential steps, AdoMet formation and the subsequent tripolyphosphate hydrolysis which occurs prior to release of AdoMet from the enzyme. This is S-adenosylmethionine synthase from Serratia proteamaculans (strain 568).